Reading from the N-terminus, the 584-residue chain is MFGIQESIQRSGSSMKEEPLGSGMNAVRTWMQGAGVLDANTAAQSGVGLARAHFEKQPPSNLRKSNFFHFVLALYDRQGQPVEIERTAFVGFVEKEKEANSEKTNNGIHYRLQLLYSNGIRTEQDFYVRLIDSMTKQAIVYEGQDKNPEMCRVLLTHEIMCSRCCDKKSCGNRNETPSDPVIIDRFFLKFFLKCNQNCLKNAGNPRDMRRFQVVVSTTVNVDGHVLAVSDNMFVHNNSKHGRRARRLDPSEAATPCIKAISPSEGWTTGGATVIIIGDNFFDGLQVIFGTMLVWSELITPHAIRVQTPPRHIPGVVEVTLSYKSKQFCKGTPGRFIYTALNEPTIDYGFQRLQKVIPRHPGDPERLPKEVILKRAADLVEALYGMPHNNQEIILKRAADIAEALYSVPRNHNQLPALANTSVHAGMMGVNSFSGQLAVNVSEASQATNQGFTRNSSSVSPHGYVPSTTPQQTNYNSVTTSMNGYGSAAMSNLGGSPTFLNGSAANSPYAIVPSSPTMASSTSLPSNCSSSSGIFSFSPANMVSAVKQKSAFAPVVRPQTSPPPTCTSTNGNSLQAISGMIVPPM.

Methionine 1 is modified (N-acetylmethionine). A compositionally biased stretch (polar residues) spans 1–14 (MFGIQESIQRSGSS). A disordered region spans residues 1–21 (MFGIQESIQRSGSSMKEEPLG). Lysine 16 is covalently cross-linked (Glycyl lysine isopeptide (Lys-Gly) (interchain with G-Cter in SUMO1); alternate). Lysine 16 participates in a covalent cross-link: Glycyl lysine isopeptide (Lys-Gly) (interchain with G-Cter in SUMO2); alternate. The interval 63–66 (RKSN) is interaction with DNA. Residues 151–170 (CRVLLTHEIMCSRCCDKKSC) form a C5-type zinc finger. Interaction with DNA regions lie at residues 197 to 204 (NCLKNAGN) and 236 to 239 (NNSK). Residues 255–338 (PCIKAISPSE…KGTPGRFIYT (84 aa)) form the IPT/TIG domain. The tract at residues 450–473 (GFTRNSSSVSPHGYVPSTTPQQTN) is disordered.

The protein belongs to the COE family. In terms of assembly, homodimer. Interacts with ZNF423 and ZNF521, leading to prevent EBF1 to bind DNA and activate target genes. Interacts with CCR4-NOT component CNOT3. As to expression, expressed exclusively in olfactory receptor neurons and their precursors.

Its subcellular location is the nucleus. Functionally, key pioneer transcription factor of B-cell specification and commitment. Recognizes variations of the palindromic sequence 5'-ATTCCCNNGGGAATT-3'. Operates in a transcription factor network to activate B-cell-specific genes and repress genes associated with alternative cell fates. For instance, positively regulates many B-cell specific genes including BCR or CD40 while repressing genes that direct cells into alternative lineages, including GATA3 and TCF7 for the T-cell lineage. In addition to its role during lymphopoiesis, controls the thermogenic gene program in adipocytes during development and in response to environmental cold. The polypeptide is Transcription factor COE1 (Ebf1) (Rattus norvegicus (Rat)).